A 456-amino-acid polypeptide reads, in one-letter code: MDPVRFPEIFHRLGGGGGGGGDLLGGGEADGLMRALCEGLRVGEEDCARFVLYGVAYWQGGRCPEWVAHITRCADLSCFATYLLTCHRSGGCEFTGGRVARDRLPSLRESVEVLQSLFLAFTLVIFKSMRVGVEAAGGAFRRMARDVHWNLLLTLGLDKAAPAFMAAAGLGEYSLPLVRCNNNMLNVLVGMKRKSRNHFQNDTPLSVPAPHLRLEPRCMFLREGRAEAPLSDHDLSFLKALRDGGRTVPCGNPFNAMVGALAFQSMAASRYVVLPNTTDIKSFTAHDLYSKIIGYNILCPFLSVPVHRGYRGGDGAGARLAVVCAECGYCLNLGKGKFSKVSFNPTHIFYCRDQKEKYLTTCASTGRIYCSFCGSCRIRTYPLKFTVGNRQYIRAVGASNCSIVVSDSATELDLVLPCLGDDCTQVLLRRVAVCDLFYLTELGPGLYCSRCLKPTS.

Belongs to the herpesviridae UL49 family.

This is an uncharacterized protein from Equus caballus (Horse).